The chain runs to 299 residues: Methionyl-tRNA formyltransferase (299 aa).

109–112 (SLLP) contacts (6S)-5,6,7,8-tetrahydrofolate.

It belongs to the Fmt family.

The catalysed reaction is L-methionyl-tRNA(fMet) + (6R)-10-formyltetrahydrofolate = N-formyl-L-methionyl-tRNA(fMet) + (6S)-5,6,7,8-tetrahydrofolate + H(+). In terms of biological role, attaches a formyl group to the free amino group of methionyl-tRNA(fMet). The formyl group appears to play a dual role in the initiator identity of N-formylmethionyl-tRNA by promoting its recognition by IF2 and preventing the misappropriation of this tRNA by the elongation apparatus. The polypeptide is Methionyl-tRNA formyltransferase (Wolbachia sp. subsp. Drosophila simulans (strain wRi)).